We begin with the raw amino-acid sequence, 182 residues long: MIELTALAIALSMDAVAVSIALGSKCEEEIRQLALKAGGFFGVAQMVMPLLGFYLGVQLHDYIGGIHHWVALGVLGFLGLKMIREATQGEKELALSSHPSSSKLLLLAFVTSLDAMAAGLTLTLLGLPLWFCLLFIGGSTFLLSFGGVHLGRKSGTYLEEKAEYLGGIILILIGVKIFIEHS.

The next 6 helical transmembrane spans lie at 2–22 (IELTALAIALSMDAVAVSIAL), 37–57 (AGGFFGVAQMVMPLLGFYLGV), 63–83 (IGGIHHWVALGVLGFLGLKMI), 104–123 (LLLLAFVTSLDAMAAGLTLT), 127–149 (LPLWFCLLFIGGSTFLLSFGGVH), and 162–182 (AEYLGGIILILIGVKIFIEHS).

It belongs to the MntP (TC 9.B.29) family.

The protein resides in the cell inner membrane. Probably functions as a manganese efflux pump. This Wolinella succinogenes (strain ATCC 29543 / DSM 1740 / CCUG 13145 / JCM 31913 / LMG 7466 / NCTC 11488 / FDC 602W) (Vibrio succinogenes) protein is Putative manganese efflux pump MntP 2.